We begin with the raw amino-acid sequence, 85 residues long: Small ribosomal subunit protein uS17 (85 aa).

The protein belongs to the universal ribosomal protein uS17 family. As to quaternary structure, part of the 30S ribosomal subunit.

Its function is as follows. One of the primary rRNA binding proteins, it binds specifically to the 5'-end of 16S ribosomal RNA. This Geobacter sulfurreducens (strain ATCC 51573 / DSM 12127 / PCA) protein is Small ribosomal subunit protein uS17.